We begin with the raw amino-acid sequence, 342 residues long: D-alanine--D-alanine ligase (342 aa).

The 195-residue stretch at 132 to 326 (KLYAKECGIE…VAKHLPKSKN (195 aa)) folds into the ATP-grasp domain. 159–210 (EYPVIIKPNHLGSSIGVSVVYDSSELEYALDVAFEFDDEVLIEPFIEGIEEY) provides a ligand contact to ATP. Mg(2+) contacts are provided by D282, E294, and N296.

Belongs to the D-alanine--D-alanine ligase family. It depends on Mg(2+) as a cofactor. Requires Mn(2+) as cofactor.

It localises to the cytoplasm. The enzyme catalyses 2 D-alanine + ATP = D-alanyl-D-alanine + ADP + phosphate + H(+). It functions in the pathway cell wall biogenesis; peptidoglycan biosynthesis. In terms of biological role, cell wall formation. The polypeptide is D-alanine--D-alanine ligase (Nitratiruptor sp. (strain SB155-2)).